The sequence spans 576 residues: uncharacterized protein (576 aa).

An N-terminal signal peptide occupies residues Met-1 to Ala-28. Residue Ser-185 is the Acyl-ester intermediate of the active site. Intrachain disulfides connect Cys-252–Cys-269 and Cys-278–Cys-286. Residues Asp-253, Asp-256, Asp-260, and Val-262 each contribute to the Ca(2+) site. Residues Asp-414 and His-464 each act as charge relay system in the active site. An intrachain disulfide couples Cys-529 to Cys-551.

It belongs to the tannase family.

This is an uncharacterized protein from Xanthomonas campestris pv. campestris (strain ATCC 33913 / DSM 3586 / NCPPB 528 / LMG 568 / P 25).